The sequence spans 137 residues: Large ribosomal subunit protein uL16 (137 aa).

Belongs to the universal ribosomal protein uL16 family. In terms of assembly, part of the 50S ribosomal subunit.

Binds 23S rRNA and is also seen to make contacts with the A and possibly P site tRNAs. In Lawsonia intracellularis (strain PHE/MN1-00), this protein is Large ribosomal subunit protein uL16.